The following is a 158-amino-acid chain: UPF0260 protein RHE_CH01262 (158 aa).

Belongs to the UPF0260 family.

The polypeptide is UPF0260 protein RHE_CH01262 (Rhizobium etli (strain ATCC 51251 / DSM 11541 / JCM 21823 / NBRC 15573 / CFN 42)).